A 172-amino-acid chain; its full sequence is Adrenodoxin-like protein 1, mitochondrial (172 aa).

The 103-residue stretch at 57–159 (VNITYVDKDG…GMELELPKAT (103 aa)) folds into the 2Fe-2S ferredoxin-type domain. [2Fe-2S] cluster contacts are provided by Cys-94, Cys-100, Cys-103, and Cys-140.

It belongs to the adrenodoxin/putidaredoxin family. Requires [2Fe-2S] cluster as cofactor.

It is found in the mitochondrion matrix. Functionally, required for ecdysteroidogenesis in the prothoracic gland which is necessary for larval to pupal transition. This is Adrenodoxin-like protein 1, mitochondrial from Drosophila melanogaster (Fruit fly).